Consider the following 366-residue polypeptide: Glutamate 5-kinase (366 aa).

K17 contacts ATP. Substrate is bound by residues S57, D144, and N156. ATP is bound by residues 176–177 (SD) and 216–222 (TGGMASK). The PUA domain maps to 278 to 352 (QGILHIDEGA…GKSTQELPAE (75 aa)).

This sequence belongs to the glutamate 5-kinase family.

Its subcellular location is the cytoplasm. It catalyses the reaction L-glutamate + ATP = L-glutamyl 5-phosphate + ADP. Its pathway is amino-acid biosynthesis; L-proline biosynthesis; L-glutamate 5-semialdehyde from L-glutamate: step 1/2. In terms of biological role, catalyzes the transfer of a phosphate group to glutamate to form L-glutamate 5-phosphate. The chain is Glutamate 5-kinase from Rhodococcus jostii (strain RHA1).